Here is a 353-residue protein sequence, read N- to C-terminus: UPF0283 membrane protein Spro_2618 (353 aa).

The next 3 membrane-spanning stretches (helical) occupy residues 71–91 (MVTA…VQWV), 101–121 (IAMG…GSVV), and 214–234 (ESTL…FIAW).

It belongs to the UPF0283 family.

Its subcellular location is the cell inner membrane. In Serratia proteamaculans (strain 568), this protein is UPF0283 membrane protein Spro_2618.